Reading from the N-terminus, the 564-residue chain is Proline--tRNA ligase (564 aa).

It belongs to the class-II aminoacyl-tRNA synthetase family. ProS type 1 subfamily. Homodimer.

The protein localises to the cytoplasm. The catalysed reaction is tRNA(Pro) + L-proline + ATP = L-prolyl-tRNA(Pro) + AMP + diphosphate. In terms of biological role, catalyzes the attachment of proline to tRNA(Pro) in a two-step reaction: proline is first activated by ATP to form Pro-AMP and then transferred to the acceptor end of tRNA(Pro). As ProRS can inadvertently accommodate and process non-cognate amino acids such as alanine and cysteine, to avoid such errors it has two additional distinct editing activities against alanine. One activity is designated as 'pretransfer' editing and involves the tRNA(Pro)-independent hydrolysis of activated Ala-AMP. The other activity is designated 'posttransfer' editing and involves deacylation of mischarged Ala-tRNA(Pro). The misacylated Cys-tRNA(Pro) is not edited by ProRS. The sequence is that of Proline--tRNA ligase from Sulfurihydrogenibium sp. (strain YO3AOP1).